The sequence spans 37 residues: Cytochrome b6-f complex subunit 5 (37 aa).

The helical transmembrane segment at 5 to 25 (LLSGIVLGLVPVTITGLFVAA) threads the bilayer.

This sequence belongs to the PetG family. The 4 large subunits of the cytochrome b6-f complex are cytochrome b6, subunit IV (17 kDa polypeptide, PetD), cytochrome f and the Rieske protein, while the 4 small subunits are PetG, PetL, PetM and PetN. The complex functions as a dimer.

The protein localises to the plastid. The protein resides in the chloroplast thylakoid membrane. Its function is as follows. Component of the cytochrome b6-f complex, which mediates electron transfer between photosystem II (PSII) and photosystem I (PSI), cyclic electron flow around PSI, and state transitions. PetG is required for either the stability or assembly of the cytochrome b6-f complex. The chain is Cytochrome b6-f complex subunit 5 from Emiliania huxleyi (Coccolithophore).